The following is a 371-amino-acid chain: Ferrochelatase (371 aa).

Residues histidine 218 and glutamate 299 each coordinate Fe cation.

It belongs to the ferrochelatase family.

It localises to the cytoplasm. The catalysed reaction is heme b + 2 H(+) = protoporphyrin IX + Fe(2+). It participates in porphyrin-containing compound metabolism; protoheme biosynthesis; protoheme from protoporphyrin-IX: step 1/1. In terms of biological role, catalyzes the ferrous insertion into protoporphyrin IX. The chain is Ferrochelatase from Cupriavidus taiwanensis (strain DSM 17343 / BCRC 17206 / CCUG 44338 / CIP 107171 / LMG 19424 / R1) (Ralstonia taiwanensis (strain LMG 19424)).